We begin with the raw amino-acid sequence, 114 residues long: T cell receptor beta variable 6-6 (114 aa).

The N-terminal stretch at 1–21 is a signal peptide; it reads MSISLLCCAAFPLLWAGPVNA. The region spanning 22-114 is the Ig-like domain; sequence GVTQTPKFRI…TSVYFCASSY (93 aa). A disulfide bridge links cysteine 42 with cysteine 110. Asparagine 84 carries N-linked (GlcNAc...) asparagine glycosylation.

As to quaternary structure, alpha-beta TR is a heterodimer composed of an alpha and beta chain; disulfide-linked. The alpha-beta TR is associated with the transmembrane signaling CD3 coreceptor proteins to form the TR-CD3 (TcR or TCR). The assembly of alpha-beta TR heterodimers with CD3 occurs in the endoplasmic reticulum where a single alpha-beta TR heterodimer associates with one CD3D-CD3E heterodimer, one CD3G-CD3E heterodimer and one CD247 homodimer forming a stable octameric structure. CD3D-CD3E and CD3G-CD3E heterodimers preferentially associate with TR alpha and TR beta chains, respectively. The association of the CD247 homodimer is the last step of TcR assembly in the endoplasmic reticulum and is required for transport to the cell surface.

The protein localises to the cell membrane. V region of the variable domain of T cell receptor (TR) beta chain that participates in the antigen recognition. Alpha-beta T cell receptors are antigen specific receptors which are essential to the immune response and are present on the cell surface of T lymphocytes. Recognize peptide-major histocompatibility (MH) (pMH) complexes that are displayed by antigen presenting cells (APC), a prerequisite for efficient T cell adaptive immunity against pathogens. Binding of alpha-beta TR to pMH complex initiates TR-CD3 clustering on the cell surface and intracellular activation of LCK that phosphorylates the ITAM motifs of CD3G, CD3D, CD3E and CD247 enabling the recruitment of ZAP70. In turn ZAP70 phosphorylates LAT, which recruits numerous signaling molecules to form the LAT signalosome. The LAT signalosome propagates signal branching to three major signaling pathways, the calcium, the mitogen-activated protein kinase (MAPK) kinase and the nuclear factor NF-kappa-B (NF-kB) pathways, leading to the mobilization of transcription factors that are critical for gene expression and essential for T cell growth and differentiation. The T cell repertoire is generated in the thymus, by V-(D)-J rearrangement. This repertoire is then shaped by intrathymic selection events to generate a peripheral T cell pool of self-MH restricted, non-autoaggressive T cells. Post-thymic interaction of alpha-beta TR with the pMH complexes shapes TR structural and functional avidity. In Homo sapiens (Human), this protein is T cell receptor beta variable 6-6.